The following is a 454-amino-acid chain: Pup--protein ligase (454 aa).

Glu9 provides a ligand contact to Mg(2+). ATP is bound at residue Arg53. A Mg(2+)-binding site is contributed by Tyr55. The active-site Proton acceptor is the Asp57. Glu63 contributes to the Mg(2+) binding site. ATP contacts are provided by Thr66 and Trp420.

This sequence belongs to the Pup ligase/Pup deamidase family. Pup-conjugating enzyme subfamily.

The enzyme catalyses ATP + [prokaryotic ubiquitin-like protein]-L-glutamate + [protein]-L-lysine = ADP + phosphate + N(6)-([prokaryotic ubiquitin-like protein]-gamma-L-glutamyl)-[protein]-L-lysine.. Its pathway is protein degradation; proteasomal Pup-dependent pathway. It functions in the pathway protein modification; protein pupylation. Catalyzes the covalent attachment of the prokaryotic ubiquitin-like protein modifier Pup to the proteasomal substrate proteins, thereby targeting them for proteasomal degradation. This tagging system is termed pupylation. The ligation reaction involves the side-chain carboxylate of the C-terminal glutamate of Pup and the side-chain amino group of a substrate lysine. The sequence is that of Pup--protein ligase from Arthrobacter sp. (strain FB24).